Here is a 345-residue protein sequence, read N- to C-terminus: Phosphoribosylformylglycinamidine cyclo-ligase (345 aa).

Belongs to the AIR synthase family.

The protein localises to the cytoplasm. The enzyme catalyses 2-formamido-N(1)-(5-O-phospho-beta-D-ribosyl)acetamidine + ATP = 5-amino-1-(5-phospho-beta-D-ribosyl)imidazole + ADP + phosphate + H(+). It participates in purine metabolism; IMP biosynthesis via de novo pathway; 5-amino-1-(5-phospho-D-ribosyl)imidazole from N(2)-formyl-N(1)-(5-phospho-D-ribosyl)glycinamide: step 2/2. The protein is Phosphoribosylformylglycinamidine cyclo-ligase of Shewanella sediminis (strain HAW-EB3).